We begin with the raw amino-acid sequence, 348 residues long: E3 ubiquitin-protein ligase IE2 (348 aa).

Residues 1–11 (MSRQINANTPV) are compositionally biased toward polar residues. A disordered region spans residues 1 to 32 (MSRQINANTPVSRRRSGLRGRRLSYSPEDAVP). The segment covering 12–22 (SRRRSGLRGRR) has biased composition (basic residues). An RING-type zinc finger spans residues 179 to 227 (CHICSCFFTDIKNYNSSFVTTSECNHAVCFKCYTSIMFDKELFKCSMCN). A coiled-coil region spans residues 272-306 (KVPEQNDVQKLQAELAELRAEMASMRAEMASKQLG). The tract at residues 312–333 (ENRRGSSSSGASSSSTSTSSSS) is disordered. Positions 316 to 333 (GSSSSGASSSSTSTSSSS) are enriched in low complexity.

Belongs to the alphabaculovirus IE2 protein family. As to quaternary structure, homooligomer. In terms of processing, auto-ubiquitinated.

The protein resides in the host nucleus. The enzyme catalyses S-ubiquitinyl-[E2 ubiquitin-conjugating enzyme]-L-cysteine + [acceptor protein]-L-lysine = [E2 ubiquitin-conjugating enzyme]-L-cysteine + N(6)-ubiquitinyl-[acceptor protein]-L-lysine.. Functionally, RING-finger E3 ubiquitin ligase that plays an important regulatory role during the initial stages of infection. Migrates to specific nuclear foci early in infection supposely to prepare the sites for viral replication by targeting and ubiquitinating host proteins. This is E3 ubiquitin-protein ligase IE2 (IE2) from Choristoneura fumiferana (Spruce budworm moth).